A 419-amino-acid chain; its full sequence is UDP-N-acetylglucosamine 1-carboxyvinyltransferase (419 aa).

K22–N23 is a binding site for phosphoenolpyruvate. Residue R93 participates in UDP-N-acetyl-alpha-D-glucosamine binding. C117 acts as the Proton donor in catalysis. Residue C117 is modified to 2-(S-cysteinyl)pyruvic acid O-phosphothioketal. UDP-N-acetyl-alpha-D-glucosamine-binding residues include D306 and I328.

Belongs to the EPSP synthase family. MurA subfamily.

The protein resides in the cytoplasm. The enzyme catalyses phosphoenolpyruvate + UDP-N-acetyl-alpha-D-glucosamine = UDP-N-acetyl-3-O-(1-carboxyvinyl)-alpha-D-glucosamine + phosphate. It participates in cell wall biogenesis; peptidoglycan biosynthesis. Cell wall formation. Adds enolpyruvyl to UDP-N-acetylglucosamine. This chain is UDP-N-acetylglucosamine 1-carboxyvinyltransferase, found in Magnetococcus marinus (strain ATCC BAA-1437 / JCM 17883 / MC-1).